Reading from the N-terminus, the 361-residue chain is Phosphoserine aminotransferase (361 aa).

Arg43 is a binding site for L-glutamate. Residues 77–78, Trp103, Thr153, Asp173, and Gln196 each bind pyridoxal 5'-phosphate; that span reads AS. Lys197 is subject to N6-(pyridoxal phosphate)lysine. 238-239 provides a ligand contact to pyridoxal 5'-phosphate; that stretch reads NT.

Belongs to the class-V pyridoxal-phosphate-dependent aminotransferase family. SerC subfamily. In terms of assembly, homodimer. It depends on pyridoxal 5'-phosphate as a cofactor.

The protein resides in the cytoplasm. The catalysed reaction is O-phospho-L-serine + 2-oxoglutarate = 3-phosphooxypyruvate + L-glutamate. It catalyses the reaction 4-(phosphooxy)-L-threonine + 2-oxoglutarate = (R)-3-hydroxy-2-oxo-4-phosphooxybutanoate + L-glutamate. The protein operates within amino-acid biosynthesis; L-serine biosynthesis; L-serine from 3-phospho-D-glycerate: step 2/3. Its pathway is cofactor biosynthesis; pyridoxine 5'-phosphate biosynthesis; pyridoxine 5'-phosphate from D-erythrose 4-phosphate: step 3/5. Its function is as follows. Catalyzes the reversible conversion of 3-phosphohydroxypyruvate to phosphoserine and of 3-hydroxy-2-oxo-4-phosphonooxybutanoate to phosphohydroxythreonine. This is Phosphoserine aminotransferase from Pseudomonas entomophila (strain L48).